The sequence spans 250 residues: Leucyl/phenylalanyl-tRNA--protein transferase (250 aa).

Belongs to the L/F-transferase family.

Its subcellular location is the cytoplasm. It catalyses the reaction N-terminal L-lysyl-[protein] + L-leucyl-tRNA(Leu) = N-terminal L-leucyl-L-lysyl-[protein] + tRNA(Leu) + H(+). The catalysed reaction is N-terminal L-arginyl-[protein] + L-leucyl-tRNA(Leu) = N-terminal L-leucyl-L-arginyl-[protein] + tRNA(Leu) + H(+). It carries out the reaction L-phenylalanyl-tRNA(Phe) + an N-terminal L-alpha-aminoacyl-[protein] = an N-terminal L-phenylalanyl-L-alpha-aminoacyl-[protein] + tRNA(Phe). In terms of biological role, functions in the N-end rule pathway of protein degradation where it conjugates Leu, Phe and, less efficiently, Met from aminoacyl-tRNAs to the N-termini of proteins containing an N-terminal arginine or lysine. The chain is Leucyl/phenylalanyl-tRNA--protein transferase from Cupriavidus pinatubonensis (strain JMP 134 / LMG 1197) (Cupriavidus necator (strain JMP 134)).